We begin with the raw amino-acid sequence, 367 residues long: dTDP-4-amino-4,6-dideoxy-D-glucose transaminase (367 aa).

Lysine 184 is subject to N6-(pyridoxal phosphate)lysine.

The protein belongs to the DegT/DnrJ/EryC1 family. It depends on pyridoxal 5'-phosphate as a cofactor.

It catalyses the reaction dTDP-4-amino-4,6-dideoxy-D-glucose + 2-oxoglutarate = dTDP-4-dehydro-6-deoxy-alpha-D-glucose + L-glutamate. It participates in bacterial outer membrane biogenesis; lipopolysaccharide biosynthesis. Catalyzes the conversion of dTDP-4-dehydro-6-deoxy-D-glucose (dTDP-D-Glc4O) to dTDP-4-amino-4,6-dideoxy-D-glucose (dTDP-D-Qui4N). L-glutamine can also be used as amino donor. The sequence is that of dTDP-4-amino-4,6-dideoxy-D-glucose transaminase (vioA) from Shigella dysenteriae.